Consider the following 352-residue polypeptide: Protein RecA (352 aa).

67-74 (GPESSGKT) lines the ATP pocket.

The protein belongs to the RecA family.

The protein localises to the cytoplasm. Can catalyze the hydrolysis of ATP in the presence of single-stranded DNA, the ATP-dependent uptake of single-stranded DNA by duplex DNA, and the ATP-dependent hybridization of homologous single-stranded DNAs. It interacts with LexA causing its activation and leading to its autocatalytic cleavage. The chain is Protein RecA from Chlamydia trachomatis serovar D (strain ATCC VR-885 / DSM 19411 / UW-3/Cx).